Here is a 172-residue protein sequence, read N- to C-terminus: Endoribonuclease YbeY (172 aa).

3 residues coordinate Zn(2+): His136, His140, and His146.

This sequence belongs to the endoribonuclease YbeY family. Requires Zn(2+) as cofactor.

Its subcellular location is the cytoplasm. In terms of biological role, single strand-specific metallo-endoribonuclease involved in late-stage 70S ribosome quality control and in maturation of the 3' terminus of the 16S rRNA. This Rickettsia canadensis (strain McKiel) protein is Endoribonuclease YbeY.